Here is a 376-residue protein sequence, read N- to C-terminus: Chaperone protein DnaJ (376 aa).

The J domain maps to 5-70 (DYYEVLGVAK…QKRAAYDQYG (66 aa)). A CR-type zinc finger spans residues 136–214 (GYDTQIRVPS…CHGSGKVKET (79 aa)). Residues Cys-149, Cys-152, Cys-166, Cys-169, Cys-188, Cys-191, Cys-202, and Cys-205 each coordinate Zn(2+). CXXCXGXG motif repeat units lie at residues 149 to 156 (CGVCHGSG), 166 to 173 (CPTCHGQG), 188 to 195 (CPKCHGTG), and 202 to 209 (CAHCHGSG).

The protein belongs to the DnaJ family. As to quaternary structure, homodimer. The cofactor is Zn(2+).

The protein resides in the cytoplasm. Its function is as follows. Participates actively in the response to hyperosmotic and heat shock by preventing the aggregation of stress-denatured proteins and by disaggregating proteins, also in an autonomous, DnaK-independent fashion. Unfolded proteins bind initially to DnaJ; upon interaction with the DnaJ-bound protein, DnaK hydrolyzes its bound ATP, resulting in the formation of a stable complex. GrpE releases ADP from DnaK; ATP binding to DnaK triggers the release of the substrate protein, thus completing the reaction cycle. Several rounds of ATP-dependent interactions between DnaJ, DnaK and GrpE are required for fully efficient folding. Also involved, together with DnaK and GrpE, in the DNA replication of plasmids through activation of initiation proteins. The protein is Chaperone protein DnaJ of Burkholderia mallei (strain NCTC 10229).